The sequence spans 503 residues: Maturase K (503 aa).

The protein belongs to the intron maturase 2 family. MatK subfamily.

The protein localises to the plastid. It is found in the chloroplast. Its function is as follows. Usually encoded in the trnK tRNA gene intron. Probably assists in splicing its own and other chloroplast group II introns. In Rosa acicularis (Prickly rose), this protein is Maturase K.